A 193-amino-acid polypeptide reads, in one-letter code: uncharacterized protein (193 aa).

The signal sequence occupies residues 1–26; sequence MRNVFVGALCMCGMSFVFSDSVRSAA.

This is an uncharacterized protein from Treponema pallidum (strain Nichols).